Here is a 447-residue protein sequence, read N- to C-terminus: Na(+)-translocating NADH-quinone reductase subunit A (447 aa).

This sequence belongs to the NqrA family. As to quaternary structure, composed of six subunits; NqrA, NqrB, NqrC, NqrD, NqrE and NqrF.

It catalyses the reaction a ubiquinone + n Na(+)(in) + NADH + H(+) = a ubiquinol + n Na(+)(out) + NAD(+). Its function is as follows. NQR complex catalyzes the reduction of ubiquinone-1 to ubiquinol by two successive reactions, coupled with the transport of Na(+) ions from the cytoplasm to the periplasm. NqrA to NqrE are probably involved in the second step, the conversion of ubisemiquinone to ubiquinol. The polypeptide is Na(+)-translocating NADH-quinone reductase subunit A (Tolumonas auensis (strain DSM 9187 / NBRC 110442 / TA 4)).